A 297-amino-acid chain; its full sequence is MEDRYGRQIRSFRLSITPKCNLKCFYCHKEGRNEEHGKLMSADEIGKIVNSSLEFGVRKIKISGGEPLLRTDLPEIISYIKNEQIKDISLTTNGILLEKYAQKLKDAGLDRVNVSLDTLDPVQYKKITAGGNIESVKKGIEKAIEVGLTPLKVNFLAMDCTVNQLPAIMDYCRKIGAILQIIEFIPMEPELKHHHVDVVPIEEEIAKNADNVFTRKFMQNRKKYVIDGLEVEFVRPMDNTEFCNHCTRIRLTYDGYLKPCLLRDDNLVDVANPLRNGEDIRKYFIKCIHEREPFCKP.

The region spanning 4–227 is the Radical SAM core domain; that stretch reads RYGRQIRSFR…MQNRKKYVID (224 aa). R13 contacts GTP. The [4Fe-4S] cluster site is built by C20 and C24. Y26 lines the S-adenosyl-L-methionine pocket. C27 lines the [4Fe-4S] cluster pocket. K61 contacts GTP. G65 serves as a coordination point for S-adenosyl-L-methionine. T91 contributes to the GTP binding site. Residue S115 participates in S-adenosyl-L-methionine binding. K152 provides a ligand contact to GTP. Residues C243 and C246 each coordinate [4Fe-4S] cluster. Residue 248-250 coordinates GTP; it reads RIR. C260 provides a ligand contact to [4Fe-4S] cluster.

The protein belongs to the radical SAM superfamily. MoaA family. [4Fe-4S] cluster is required as a cofactor.

The catalysed reaction is GTP + AH2 + S-adenosyl-L-methionine = (8S)-3',8-cyclo-7,8-dihydroguanosine 5'-triphosphate + 5'-deoxyadenosine + L-methionine + A + H(+). It participates in cofactor biosynthesis; molybdopterin biosynthesis. Functionally, catalyzes the cyclization of GTP to (8S)-3',8-cyclo-7,8-dihydroguanosine 5'-triphosphate. The chain is Probable GTP 3',8-cyclase from Methanococcus maripaludis (strain DSM 14266 / JCM 13030 / NBRC 101832 / S2 / LL).